Reading from the N-terminus, the 453-residue chain is tRNA-2-methylthio-N(6)-dimethylallyladenosine synthase (453 aa).

The region spanning 17-135 (GTFFIETWGC…FPEYLNRAKQ (119 aa)) is the MTTase N-terminal domain. Residues cysteine 26, cysteine 62, cysteine 96, cysteine 172, cysteine 176, and cysteine 179 each contribute to the [4Fe-4S] cluster site. In terms of domain architecture, Radical SAM core spans 158 to 388 (RKSSTKAFVT…VEVVNKSCEK (231 aa)). The 63-residue stretch at 391–453 (KKYQDRIVKV…LSFSLEGEEV (63 aa)) folds into the TRAM domain.

This sequence belongs to the methylthiotransferase family. MiaB subfamily. Monomer. [4Fe-4S] cluster serves as cofactor.

It localises to the cytoplasm. It catalyses the reaction N(6)-dimethylallyladenosine(37) in tRNA + (sulfur carrier)-SH + AH2 + 2 S-adenosyl-L-methionine = 2-methylsulfanyl-N(6)-dimethylallyladenosine(37) in tRNA + (sulfur carrier)-H + 5'-deoxyadenosine + L-methionine + A + S-adenosyl-L-homocysteine + 2 H(+). Catalyzes the methylthiolation of N6-(dimethylallyl)adenosine (i(6)A), leading to the formation of 2-methylthio-N6-(dimethylallyl)adenosine (ms(2)i(6)A) at position 37 in tRNAs that read codons beginning with uridine. This chain is tRNA-2-methylthio-N(6)-dimethylallyladenosine synthase, found in Clostridium tetani (strain Massachusetts / E88).